We begin with the raw amino-acid sequence, 450 residues long: Tubulin alpha chain (450 aa).

GTP is bound at residue glutamine 11. An N6-acetyllysine modification is found at lysine 40. Positions 71, 140, 144, 145, 179, 206, and 228 each coordinate GTP. Residue glutamate 71 participates in Mg(2+) binding. Glutamate 254 is an active-site residue. Residues 431-450 (DYEEVGTDSVGEEDEEGEEY) are disordered.

The protein belongs to the tubulin family. In terms of assembly, dimer of alpha and beta chains. A typical microtubule is a hollow water-filled tube with an outer diameter of 25 nm and an inner diameter of 15 nM. Alpha-beta heterodimers associate head-to-tail to form protofilaments running lengthwise along the microtubule wall with the beta-tubulin subunit facing the microtubule plus end conferring a structural polarity. Microtubules usually have 13 protofilaments but different protofilament numbers can be found in some organisms and specialized cells. It depends on Mg(2+) as a cofactor. Post-translationally, some glutamate residues at the C-terminus are polyglycylated, resulting in polyglycine chains on the gamma-carboxyl group. Glycylation is mainly limited to tubulin incorporated into axonemes (cilia and flagella) whereas glutamylation is prevalent in neuronal cells, centrioles, axonemes, and the mitotic spindle. Both modifications can coexist on the same protein on adjacent residues, and lowering polyglycylation levels increases polyglutamylation, and reciprocally. The precise function of polyglycylation is still unclear. Some glutamate residues at the C-terminus are polyglutamylated, resulting in polyglutamate chains on the gamma-carboxyl group. Polyglutamylation plays a key role in microtubule severing by spastin (SPAST). SPAST preferentially recognizes and acts on microtubules decorated with short polyglutamate tails: severing activity by SPAST increases as the number of glutamates per tubulin rises from one to eight, but decreases beyond this glutamylation threshold. In terms of processing, acetylation of alpha chains at Lys-40 is located inside the microtubule lumen. This modification has been correlated with increased microtubule stability, intracellular transport and ciliary assembly. Post-translationally, undergoes a tyrosination/detyrosination cycle, the cyclic removal and re-addition of a C-terminal tyrosine residue by the enzymes tubulin tyrosine carboxypeptidase (MATCAP, VASH1 or VASH2) and tubulin tyrosine ligase (TTL), respectively. Tyrosination promotes microtubule interaction with CAP-Gly microtubule plus-end tracking proteins. Tyrosinated tubulins regulate the initiation of dynein-driven motility. In terms of processing, detyrosination is involved in metaphase plate congression by guiding chromosomes during mitosis. Detyrosination increases microtubules-dependent mechanotransduction in dystrophic cardiac and skeletal muscle. In cardiomyocytes, detyrosinated microtubules are required to resist to contractile compression during contraction.

Its subcellular location is the cytoplasm. It is found in the cytoskeleton. It catalyses the reaction GTP + H2O = GDP + phosphate + H(+). In terms of biological role, tubulin is the major constituent of microtubules, a cylinder consisting of laterally associated linear protofilaments composed of alpha- and beta-tubulin heterodimers. Microtubules grow by the addition of GTP-tubulin dimers to the microtubule end, where a stabilizing cap forms. Below the cap, tubulin dimers are in GDP-bound state, owing to GTPase activity of alpha-tubulin. This is Tubulin alpha chain from Oncorhynchus keta (Chum salmon).